The following is a 753-amino-acid chain: MSDVKYFEDTEFGLIEAVATIDNGDFGTRTIRFETGQLARQADGAVTTYLDDDTMLLATTTASNQPREGFDFFPLTVDVEERMYAAGRIPGSFFRREGRPSTEAILACRLIDRPLRPTFVKGLRNEVQIVVTVMSMNPEDYYDVVAINGASAATRISGLPVSGAVGGVRMALVVDEKHPEGQWVAFPTHAQHEQSVFEIVVAGRLVERKRGNKTFSDVAVMMVEAGASENVVNRVKDGAPAPTEKIVSDGLEAAKPFIDILCRAQEGLAQRVGNAAKEFPLFPPYTDEVYSAVERKVSKKLASLLTLKAKQERDDATNAYMEEIEAELLPKFEASYSSAAEASKEIRAAYNAVMKSIVRRMILTDHFRIDGRGVTDIRDLAVEVELIPRAHGSSLFERGETQILGVTTLDMLKMEQQIDSLAPGDAKRYMHHYNFPPYSTGETGRVGSPKRREIGHGALAERAVLPVIPSREEFPYSIRQVSEALGSNGSTSMGSVCASTLSLYNAGVPLKAPVAGIAMGLVSGEIDGKTEYVALTDILGAEDAFGDMDFKVAGTADFITALQLDTKLDGIPSKVLSDALEQARDARLTILNTMADVINGPDEMSKFAPRITTVKIPVAKIGELIGPKGKNINALTEETGANISIEDDGTVFISAADGASAEAAIEKINALANPQLPKVGERFLGTVVKTTAFGAFVSLLPGRDGLVHISKLGNGKRVEKVDDVVKVGEKIQVEIADIDNRGKISLVPVAEED.

Positions 543 and 549 each coordinate Mg(2+). One can recognise a KH domain in the interval 609–668 (PRITTVKIPVAKIGELIGPKGKNINALTEETGANISIEDDGTVFISAADGASAEAAIEKI). Positions 680–749 (GERFLGTVVK…NRGKISLVPV (70 aa)) constitute an S1 motif domain.

It belongs to the polyribonucleotide nucleotidyltransferase family. Requires Mg(2+) as cofactor.

It localises to the cytoplasm. The catalysed reaction is RNA(n+1) + phosphate = RNA(n) + a ribonucleoside 5'-diphosphate. In terms of biological role, involved in mRNA degradation. Catalyzes the phosphorolysis of single-stranded polyribonucleotides processively in the 3'- to 5'-direction. The sequence is that of Polyribonucleotide nucleotidyltransferase from Corynebacterium glutamicum (strain R).